We begin with the raw amino-acid sequence, 466 residues long: MSWKGFTKALARTPQTLRSKFNVGEITKDPIYEDAGRRFKSLETEAKKLAEDAKKYTDAINGLLNHQIGFADACIEIYKPISGRASDPESYEQEGNAEGIEAAEAYKEIVYDLQKNLASEMDVINTRIVNPTGELLKIVKDVDKLLLKRDHKQLDYDRHRSSFKKLQEKKDKSLKDEKKLYEAETAFEQSSQEYEYYNEMLKEELPKLFALAQSFIAPLFQGFYYMQLNVYYVLYEKMSHCEIQYFDFNTDILESYERRRGDVKDRAEALTITKFKTAKPTYKRPGMGPGGKDATASSSSSFSSKREEAAAEPSSSTATDIPPPYSTPSVAGASDYSTPSAGYQTVQTTTTTTEAAAAQYPQAAFPPPPVMPQPAAAAVTTPVAAPVAAAAAAVPVPPPAPAPAAAPAAEHVVALYDYAAQAAGDLSFHAGDRIEVVSRTDNQNEWWIGRLNGAQGQFPGNYVQLE.

A BAR domain is found at 17-269; sequence LRSKFNVGEI…RGDVKDRAEA (253 aa). Coiled-coil stretches lie at residues 31 to 67 and 177 to 204; these read IYEDAGRRFKSLETEAKKLAEDAKKYTDAINGLLNHQ and EKKLYEAETAFEQSSQEYEYYNEMLKEE. The disordered stretch occupies residues 280–342; that stretch reads PTYKRPGMGP…ASDYSTPSAG (63 aa). Residues 294–303 show a composition bias toward low complexity; it reads ATASSSSSFS. Residues Ser298, Ser299, Ser301, and Ser303 each carry the phosphoserine modification. Positions 407–466 constitute an SH3 domain; sequence PAAEHVVALYDYAAQAAGDLSFHAGDRIEVVSRTDNQNEWWIGRLNGAQGQFPGNYVQLE.

In terms of biological role, has a role in DNA damage signaling as a part of stress response processes. The sequence is that of Protein hob1 (hob1) from Schizosaccharomyces pombe (strain 972 / ATCC 24843) (Fission yeast).